A 162-amino-acid chain; its full sequence is uncharacterized protein (162 aa).

The N-terminal stretch at 1-19 (MARVYILFFSVFFVFPLFS) is a signal peptide. 2 consecutive transmembrane segments (helical) span residues 53-75 (LSIGAFPIVTLLSFITYDIIRLI) and 105-127 (IVFGVAVGISVTIGLIDVTYRAV).

Its subcellular location is the cell membrane. This is an uncharacterized protein from Treponema pallidum (strain Nichols).